We begin with the raw amino-acid sequence, 507 residues long: Peroxisomal catalase (507 aa).

Active-site residues include H65 and N138. Residue Y348 participates in heme binding. Residues 505 to 507 (SKI) carry the Microbody targeting signal motif.

Belongs to the catalase family. Homotetramer. Heme serves as cofactor.

Its subcellular location is the peroxisome matrix. It carries out the reaction 2 H2O2 = O2 + 2 H2O. Catalyzes the degradation of hydrogen peroxide (H(2)O(2)) generated by peroxisomal oxidases to water and oxygen, thereby protecting cells from the toxic effects of hydrogen peroxide. The protein is Peroxisomal catalase (PXP9) of Pichia angusta (Yeast).